The sequence spans 122 residues: Lectin A (122 aa).

Tyr38 contacts Ca(2+). 3 residues coordinate an alpha-D-galactoside: Glu44, Gln57, and Asp96. The Ca(2+) site is built by Asp96, Thr100, Asp103, and Asn104. An alpha-D-galactoside is bound at residue Asp103.

The protein belongs to the LecA/PllA lectin family. Homotetramer.

In terms of biological role, lectin that specifically binds alpha-galactoside-terminating glycoconjugates. Shows high apparent binding to the alpha-Gal epitope (Gal-alpha-1,3-Gal-beta-1,4-GlcNAc terminating glycans) as well as to Gal-alpha-1,4-GlcNAc and Gal-alpha-1,3-GalNAc. Gal-alpha-1,3-GalNAc may be one natural ligand bound by PllA both in the nematode symbiont and in infected insects. This is Lectin A from Photorhabdus laumondii subsp. laumondii (strain DSM 15139 / CIP 105565 / TT01) (Photorhabdus luminescens subsp. laumondii).